Here is a 324-residue protein sequence, read N- to C-terminus: Leucine carboxyl methyltransferase 1 (324 aa).

S-adenosyl-L-methionine-binding positions include R74, G101, D128, 172-173 (DL), and E196.

It belongs to the methyltransferase superfamily. LCMT family.

The catalysed reaction is [phosphatase 2A protein]-C-terminal L-leucine + S-adenosyl-L-methionine = [phosphatase 2A protein]-C-terminal L-leucine methyl ester + S-adenosyl-L-homocysteine. In terms of biological role, methylates the carboxyl group of the C-terminal leucine residue of protein phosphatase 2A catalytic subunits to form alpha-leucine ester residues. This is Leucine carboxyl methyltransferase 1 (PPM1) from Yarrowia lipolytica (strain CLIB 122 / E 150) (Yeast).